Reading from the N-terminus, the 97-residue chain is Secreted LysM effector Mg1LysM (97 aa).

Residues 1-18 (MQFTALVAALLSVAAVQA) form the signal peptide. A LysM domain is found at 37-84 (QQYVARSGDTLTKIAQEIYHDVVGVCDIARANNLADPNRIDAGTPYTI). Positions 44, 48, 74, and 76 each coordinate chitin.

Belongs to the secreted LysM effector family. Forms homodimers in a chitin-independent manner through interactions at the N-termini of Mg1LysM monomers. Homodimers are further polymerized in a chitin-dependent manner.

It is found in the secreted. Its subcellular location is the cell wall. Secreted effector that enables the plant pathogenic fungus to manipulate host defenses for successful infection. Binds chitin but not cellulose or xylan. Chitin-induced polymerization of homodimers forms a contiguous Mg1LysM highly oligomeric super-complexe that is anchored to the chitin in the fungal cell wall to prevent hydrolysis by host chitinases. This chain is Secreted LysM effector Mg1LysM, found in Zymoseptoria tritici (strain ST99CH_3D7).